The following is a 151-amino-acid chain: Small ribosomal subunit protein bS6 (151 aa).

The tract at residues 97 to 151 is disordered; the sequence is EAEPSAMMQKRDRDDRKDRDRGDRPRRRDDDFGGGDRGDRGDRGDRPERNFGGEN. A compositionally biased stretch (basic and acidic residues) spans 105 to 151; that stretch reads QKRDRDDRKDRDRGDRPRRRDDDFGGGDRGDRGDRGDRPERNFGGEN.

It belongs to the bacterial ribosomal protein bS6 family.

Its function is as follows. Binds together with bS18 to 16S ribosomal RNA. In Methylorubrum populi (strain ATCC BAA-705 / NCIMB 13946 / BJ001) (Methylobacterium populi), this protein is Small ribosomal subunit protein bS6.